An 837-amino-acid polypeptide reads, in one-letter code: Protein translocase subunit SecA (837 aa).

Residues glutamine 83, 101 to 105 (GEGKT), and aspartate 494 each bind ATP.

It belongs to the SecA family. In terms of assembly, monomer and homodimer. Part of the essential Sec protein translocation apparatus which comprises SecA, SecYEG and auxiliary proteins SecDF. Other proteins may also be involved.

It localises to the cell membrane. It is found in the cytoplasm. It carries out the reaction ATP + H2O + cellular proteinSide 1 = ADP + phosphate + cellular proteinSide 2.. Part of the Sec protein translocase complex. Interacts with the SecYEG preprotein conducting channel. Has a central role in coupling the hydrolysis of ATP to the transfer of proteins into and across the cell membrane, serving as an ATP-driven molecular motor driving the stepwise translocation of polypeptide chains across the membrane. In Ureaplasma parvum serovar 3 (strain ATCC 27815 / 27 / NCTC 11736), this protein is Protein translocase subunit SecA.